The sequence spans 382 residues: Apolipoprotein A-IV (382 aa).

The first 20 residues, 1-20, serve as a signal peptide directing secretion; it reads MFLKAVVLTLSLVAVTGAQA. Tandem repeats lie at residues 33 to 54, 60 to 81, 82 to 103, 115 to 136, 137 to 158, 159 to 180, 181 to 202, 203 to 224, 225 to 246, 247 to 268, 269 to 286, 287 to 308, and 309 to 330. A 13 X 22 AA approximate tandem repeats region spans residues 33–330; sequence DYFSQLSNNA…QVEELRQKLG (298 aa).

This sequence belongs to the apolipoprotein A1/A4/E family. Homodimer. Phosphorylation sites are present in the extracellular medium.

It is found in the secreted. May have a role in chylomicrons and VLDL secretion and catabolism. Required for efficient activation of lipoprotein lipase by ApoC-II; potent activator of LCAT. Apoa-IV is a major component of HDL and chylomicrons. The protein is Apolipoprotein A-IV (APOA4) of Neomonachus schauinslandi (Hawaiian monk seal).